Here is a 171-residue protein sequence, read N- to C-terminus: S-ribosylhomocysteine lyase (171 aa).

The Fe cation site is built by His54, His58, and Cys128.

The protein belongs to the LuxS family. In terms of assembly, homodimer. The cofactor is Fe cation.

It carries out the reaction S-(5-deoxy-D-ribos-5-yl)-L-homocysteine = (S)-4,5-dihydroxypentane-2,3-dione + L-homocysteine. In terms of biological role, involved in the synthesis of autoinducer 2 (AI-2) which is secreted by bacteria and is used to communicate both the cell density and the metabolic potential of the environment. The regulation of gene expression in response to changes in cell density is called quorum sensing. Catalyzes the transformation of S-ribosylhomocysteine (RHC) to homocysteine (HC) and 4,5-dihydroxy-2,3-pentadione (DPD). The sequence is that of S-ribosylhomocysteine lyase from Enterobacter sp. (strain 638).